The primary structure comprises 213 residues: MTDKSHQCVIIGIAGASASGKSLIASTLYRELRDQVGDEHIGVIPEDSYYKDQSHLSMEERVKTNYDHPNAMDHSLLFQHLQMIKNGTPIDLPVYSYVDHTRTQDTIHIEPKKVIILEGILLLTDARLREAMNFSIFVDTPLDICLMRRIKRDVNERGRSMDSVMAQYQKTVRPMFLQFIEPSKQYADIIVPRGGKNRIAIDILKAKISQFFE.

Gly-15–Ser-22 lines the ATP pocket.

This sequence belongs to the uridine kinase family.

It localises to the cytoplasm. It catalyses the reaction uridine + ATP = UMP + ADP + H(+). The catalysed reaction is cytidine + ATP = CMP + ADP + H(+). It functions in the pathway pyrimidine metabolism; CTP biosynthesis via salvage pathway; CTP from cytidine: step 1/3. The protein operates within pyrimidine metabolism; UMP biosynthesis via salvage pathway; UMP from uridine: step 1/1. This Enterobacter sp. (strain 638) protein is Uridine kinase.